The primary structure comprises 334 residues: Siroheme decarboxylase (334 aa).

Histidine 93 is an active-site residue.

The protein belongs to the Ahb/Nir family.

It catalyses the reaction siroheme + 2 H(+) = 12,18-didecarboxysiroheme + 2 CO2. It participates in porphyrin-containing compound metabolism. Functionally, involved in heme d1 biosynthesis. Catalyzes the decarboxylation of siroheme into didecarboxysiroheme. Siroheme is probably decarboxylated to monodecarboxysiroheme, which is in turn decarboxylated to didecarboxysiroheme. This is Siroheme decarboxylase from Hydrogenobacter thermophilus (strain DSM 6534 / IAM 12695 / TK-6).